The sequence spans 498 residues: MVAPSETQIVQAVKAKLESGLTSTSDVVREDEVRRLLATLELEHDWQDIAVKKFISILCKHSLMPVSKPNDGCTSRSTSCPGGKKKKKSKTDTSIPKSFIDPTISFPAGIRGVYFDPVKGKGLVATRSFSKGDLLFTEDAYIPTPPPEAFDQMASGQLCAQCFLPISSAPVALAIKNCSKCKHRFCTTACYKTAMATHHTLLCTGINASAKPLIELIERQKWQSLHCVARSLARLLMTLTRQYHGQANKKADTQDSVATYGDFETVYARLSSFATVSELERRSRNPGWTTEKASFESILVEAHTALCNALDPYSSTRNANLEPFHVSADYLDSTRKPLIKDLFCLATFMKLVGRANINMEKFGGLYSLHSFLNHSCSPNLEIRHVPERAILSSMKVAAIALCDIHPDDELVISYIDPNTSLARRQLLLYRDYCFGPCTCDKCTTQLGALGLVYDPAKHAVKAFLDSVAHKTRPDPDHTLPPTSQDSTLEDQLRASLGF.

The disordered stretch occupies residues 68-94; sequence KPNDGCTSRSTSCPGGKKKKKSKTDTS. The 308-residue stretch at 108–415 folds into the SET domain; it reads AGIRGVYFDP…PDDELVISYI (308 aa).

Belongs to the class V-like SAM-binding methyltransferase superfamily. Histone-lysine methyltransferase family. SET5 subfamily.

It localises to the nucleus. Its subcellular location is the chromosome. The protein localises to the cytoplasm. It catalyses the reaction L-lysyl-[histone] + S-adenosyl-L-methionine = N(6)-methyl-L-lysyl-[histone] + S-adenosyl-L-homocysteine + H(+). In terms of biological role, histone methyltransferase that monomethylates 'Lys-5', 'Lys-8' and 'Lys-12' of histone H4 (H4K5me1, H4K8me1 and H4K12me1, respectively), thereby controlling gene expression and remodeling chromatin structures. In Mycosarcoma maydis (Corn smut fungus), this protein is Histone-lysine N-methyltransferase SET5 (SET5).